We begin with the raw amino-acid sequence, 317 residues long: Beta-ketoacyl-[acyl-carrier-protein] synthase III (317 aa).

Active-site residues include Cys112 and His244. The tract at residues 245–249 is ACP-binding; it reads QANLR. Asn274 is an active-site residue.

Belongs to the thiolase-like superfamily. FabH family. In terms of assembly, homodimer.

It is found in the cytoplasm. It carries out the reaction malonyl-[ACP] + acetyl-CoA + H(+) = 3-oxobutanoyl-[ACP] + CO2 + CoA. It functions in the pathway lipid metabolism; fatty acid biosynthesis. Functionally, catalyzes the condensation reaction of fatty acid synthesis by the addition to an acyl acceptor of two carbons from malonyl-ACP. Catalyzes the first condensation reaction which initiates fatty acid synthesis and may therefore play a role in governing the total rate of fatty acid production. Possesses both acetoacetyl-ACP synthase and acetyl transacylase activities. Its substrate specificity determines the biosynthesis of branched-chain and/or straight-chain of fatty acids. This is Beta-ketoacyl-[acyl-carrier-protein] synthase III from Enterobacter sp. (strain 638).